A 186-amino-acid polypeptide reads, in one-letter code: Large ribosomal subunit protein uL6 (186 aa).

This sequence belongs to the universal ribosomal protein uL6 family. In terms of assembly, part of the 50S ribosomal subunit.

In terms of biological role, this protein binds to the 23S rRNA, and is important in its secondary structure. It is located near the subunit interface in the base of the L7/L12 stalk, and near the tRNA binding site of the peptidyltransferase center. This is Large ribosomal subunit protein uL6 from Ignicoccus hospitalis (strain KIN4/I / DSM 18386 / JCM 14125).